The sequence spans 260 residues: Cytochrome c oxidase subunit 2 (260 aa).

The Mitochondrial intermembrane segment spans residues 1–43; it reads MILRLLECRFFTIALCDAAEPWQLGFQDAATPMMQGIIDLHHD. The helical transmembrane segment at 44 to 64 threads the bilayer; that stretch reads IFFFLILILVFVLWMLVRALW. The Mitochondrial matrix segment spans residues 65–84; it reads HFNEQTNPIPQRIVHGTTIE. The chain crosses the membrane as a helical span at residues 85–105; sequence IIWTIFPSVILLFIAIPSFAL. At 106 to 260 the chain is on the mitochondrial intermembrane side; it reads LYSMDGVLVD…VSNQLILQTN (155 aa). Residues histidine 189, cysteine 224, glutamate 226, cysteine 228, histidine 232, and methionine 235 each contribute to the Cu cation site. Glutamate 226 contacts Mg(2+).

Belongs to the cytochrome c oxidase subunit 2 family. In terms of assembly, component of the cytochrome c oxidase (complex IV, CIV), a multisubunit enzyme composed of a catalytic core of 3 subunits and several supernumerary subunits. The complex exists as a monomer or a dimer and forms supercomplexes (SCs) in the inner mitochondrial membrane with ubiquinol-cytochrome c oxidoreductase (cytochrome b-c1 complex, complex III, CIII). The cofactor is Cu cation.

Its subcellular location is the mitochondrion inner membrane. The enzyme catalyses 4 Fe(II)-[cytochrome c] + O2 + 8 H(+)(in) = 4 Fe(III)-[cytochrome c] + 2 H2O + 4 H(+)(out). Its function is as follows. Component of the cytochrome c oxidase, the last enzyme in the mitochondrial electron transport chain which drives oxidative phosphorylation. The respiratory chain contains 3 multisubunit complexes succinate dehydrogenase (complex II, CII), ubiquinol-cytochrome c oxidoreductase (cytochrome b-c1 complex, complex III, CIII) and cytochrome c oxidase (complex IV, CIV), that cooperate to transfer electrons derived from NADH and succinate to molecular oxygen, creating an electrochemical gradient over the inner membrane that drives transmembrane transport and the ATP synthase. Cytochrome c oxidase is the component of the respiratory chain that catalyzes the reduction of oxygen to water. Electrons originating from reduced cytochrome c in the intermembrane space (IMS) are transferred via the dinuclear copper A center (CU(A)) of subunit 2 and heme A of subunit 1 to the active site in subunit 1, a binuclear center (BNC) formed by heme A3 and copper B (CU(B)). The BNC reduces molecular oxygen to 2 water molecules using 4 electrons from cytochrome c in the IMS and 4 protons from the mitochondrial matrix. The polypeptide is Cytochrome c oxidase subunit 2 (COX2) (Zea mays (Maize)).